The chain runs to 67 residues: Peptide Ctry2606 (67 aa).

A signal peptide spans 1 to 23 (MKTQTALFSFFLVLLLVATQTEG). Leu-33 is subject to Leucine amide. Residues 37–67 (ALRNQNFVDYAFDPSLSAADWRALETLLEEY) constitute a propeptide that is removed on maturation.

This sequence belongs to the non-disulfide-bridged peptide (NDBP) superfamily. Short antimicrobial peptide (group 4) family. As to expression, expressed by the venom gland.

The protein localises to the secreted. In terms of biological role, antimicrobial peptide. The protein is Peptide Ctry2606 of Chaerilus tryznai (Scorpion).